A 546-amino-acid chain; its full sequence is Phenylalanine--tRNA ligase beta subunit (546 aa).

One can recognise a B5 domain in the interval 266–342; it reads LAPAERVVSV…IAYGIENFDA (77 aa). Positions 320, 326, 329, and 330 each coordinate Mg(2+).

This sequence belongs to the phenylalanyl-tRNA synthetase beta subunit family. Type 2 subfamily. Tetramer of two alpha and two beta subunits. Mg(2+) is required as a cofactor.

The protein localises to the cytoplasm. The catalysed reaction is tRNA(Phe) + L-phenylalanine + ATP = L-phenylalanyl-tRNA(Phe) + AMP + diphosphate + H(+). The chain is Phenylalanine--tRNA ligase beta subunit from Methanoculleus marisnigri (strain ATCC 35101 / DSM 1498 / JR1).